Here is a 147-residue protein sequence, read N- to C-terminus: Hemoglobin subunit beta (147 aa).

The Globin domain maps to 3 to 147 (LLSAEENAHV…VANALAHKYH (145 aa)). Thr13 carries the post-translational modification Phosphothreonine. Residue Ser45 is modified to Phosphoserine. Lys60 is modified (N6-acetyllysine). His64 contacts heme b. An N6-acetyllysine modification is found at Lys83. His93 contacts heme b. Cys94 is subject to S-nitrosocysteine. Lys145 is subject to N6-acetyllysine.

The protein belongs to the globin family. In terms of assembly, heterotetramer of two alpha chains and two beta chains. Red blood cells.

In terms of biological role, involved in oxygen transport from the lung to the various peripheral tissues. This chain is Hemoglobin subunit beta (HBB), found in Eulemur fulvus fulvus (Brown lemur).